A 95-amino-acid polypeptide reads, in one-letter code: SMAD5 antisense gene protein 1 (95 aa).

2 disordered regions span residues 1 to 24 and 43 to 70; these read MHKQ…SSWS and SSPT…KPAN. Over residues 7–19 the composition is skewed to pro residues; the sequence is LLPPPATPPPPPQ.

Expressed in fetal tissues.

The polypeptide is SMAD5 antisense gene protein 1 (SMAD5-AS1) (Homo sapiens (Human)).